The following is a 215-amino-acid chain: MOB kinase activator-like 1B (215 aa).

Residues 1-25 are disordered; that stretch reads MSLFGLGRNQKTFRPKKSAPSGTKG. Zn(2+) contacts are provided by Cys79, Cys84, His161, and His166.

Belongs to the MOB1/phocein family. In terms of assembly, interacts with SIK1. Expression is detected along the vasculature in cotyledons, hypocotyls and roots of 3- to 4-day-old seedlings.

The protein is MOB kinase activator-like 1B of Arabidopsis thaliana (Mouse-ear cress).